The following is a 281-amino-acid chain: NADH--cytochrome b5 reductase 1 (281 aa).

Residues 13–33 (ILLGVFVAFVAVGAGAAYFLT) traverse the membrane as a helical segment. An AKR2A-binding sequence (ABS) required for mitochondrion outer membrane targeting motif is present at residues 34–40 (SSKKRRV). The 105-residue stretch at 45–149 (ENFKEFKLVK…KGPKGRFKYQ (105 aa)) folds into the FAD-binding FR-type domain. Residues 129-144 (REMR…GPKG) and 155-187 (AFGM…KVHL) each bind FAD. Threonine 166 bears the Phosphothreonine mark.

Belongs to the flavoprotein pyridine nucleotide cytochrome reductase family. In terms of assembly, monomer. Interacts with AKR2A. It depends on FAD as a cofactor. Expressed in roots, stems, flowers and siliques. Detected in leaves.

The protein resides in the mitochondrion outer membrane. The catalysed reaction is 2 Fe(III)-[cytochrome b5] + NADH = 2 Fe(II)-[cytochrome b5] + NAD(+) + H(+). Functionally, reductase transferring electrons from NADH to cytochrome b5. Required for the NADH-dependent electron transfer involved in the desaturation and hydroxylation of fatty acids and in the desaturation of sterol precursors. No activity with NADPH as electron donor. This chain is NADH--cytochrome b5 reductase 1, found in Arabidopsis thaliana (Mouse-ear cress).